A 123-amino-acid polypeptide reads, in one-letter code: Thioredoxin H-type (123 aa).

Positions 2–119 constitute a Thioredoxin domain; it reads AATAELIPAG…IEAKLLKHSQ (118 aa). A disulfide bond links C45 and C48.

This sequence belongs to the thioredoxin family. Plant H-type subfamily.

Its subcellular location is the cytoplasm. Participates in various redox reactions through the reversible oxidation of the active center dithiol to a disulfide. The H form is known to activate a number of cytosolic enzymes. This chain is Thioredoxin H-type (PEC-2), found in Brassica campestris (Field mustard).